The following is a 159-amino-acid chain: Troponin C, skeletal muscle (159 aa).

Position 1 is an N-acetylthreonine (Thr1). EF-hand domains lie at 14–49 (EMIA…LGQT), 50–85 (PTKE…QMKE), 90–125 (KSEE…SGEH), and 126–159 (VTDE…EGVQ). 19 residues coordinate Ca(2+): Asp27, Asp29, Asp33, Glu38, Asp63, Asp65, Ser67, Thr69, Glu74, Asp103, Asn105, Asp107, Tyr109, Glu114, Asp139, Asn141, Asp143, Arg145, and Glu150.

Belongs to the troponin C family.

In terms of biological role, troponin is the central regulatory protein of striated muscle contraction. Tn consists of three components: Tn-I which is the inhibitor of actomyosin ATPase, Tn-T which contains the binding site for tropomyosin and Tn-C. The binding of calcium to Tn-C abolishes the inhibitory action of Tn on actin filaments. The sequence is that of Troponin C, skeletal muscle (TNNC2) from Sus scrofa (Pig).